The chain runs to 177 residues: CCHC-type zinc finger nucleic acid binding protein (177 aa).

At S2 the chain carries N-acetylserine. Residues 4–21 (NECFKCGRSGHWARECPT) form a CCHC-type 1 zinc finger. Residue K8 is modified to N6-acetyllysine. An omega-N-methylarginine; by PRMT1 mark is found at R25 and R27. The interval 25–38 (RGRGMRSRGRGGFT) is RNA-binding Arg/Gly-rich region (RGG-box). R32 and R34 each carry omega-N-methylarginine. S49 is modified (phosphoserine). CCHC-type zinc fingers lie at residues 52–69 (DICYRCGESGHLAKDCDL), 72–89 (DACYNCGRGGHIAKDCKE), 96–113 (QCCYNCGKPGHLARDCDH), 117–134 (QKCYSCGEFGHIQKDCTK), 135–152 (VKCYRCGETGHVAINCSK), and 156–173 (VNCYRCGESGHLARECTI). Residues A73, R79, and G80 each carry the omega-N-methylarginine modification.

Associates with the 40S ribosomal subunit, the 80S ribosome and with polysomes. Post-translationally, arginine methylation by PRMT1 in the Arg/Gly-rich region impedes RNA binding. As to expression, expressed in the liver, kidney, spleen, testis, lung, muscle and adrenal glands.

It is found in the nucleus. It localises to the cytoplasm. The protein resides in the endoplasmic reticulum. In terms of biological role, single-stranded DNA-binding protein that preferentially binds to the sterol regulatory element (SRE) sequence 5'-GTGCGGTG-3', and thereby mediates transcriptional repression. Has a role as transactivator of the Myc promoter. Binds single-stranded RNA in a sequence-specific manner. Binds G-rich elements in target mRNA coding sequences. Prevents G-quadruplex structure formation in vitro, suggesting a role in supporting translation by resolving stable structures on mRNAs. Its function is as follows. Binds to RNA. This chain is CCHC-type zinc finger nucleic acid binding protein, found in Homo sapiens (Human).